Consider the following 340-residue polypeptide: Cathepsin B (340 aa).

The N-terminal stretch at Met1 to Ala17 is a signal peptide. A propeptide spans Arg18–Asp79 (activation peptide). Residue Asn38 is glycosylated (N-linked (GlcNAc...) asparagine). Intrachain disulfides connect Cys93/Cys122, Cys105/Cys150, Cys141/Cys208, Cys142/Cys146, Cys179/Cys212, and Cys187/Cys198. The active site involves Cys108. Asn192 carries N-linked (GlcNAc...) asparagine glycosylation. Catalysis depends on residues His279 and Asn299.

It belongs to the peptidase C1 family. In terms of assembly, dimer of a heavy chain and a light chain cross-linked by a disulfide bond.

The protein resides in the lysosome. It catalyses the reaction Hydrolysis of proteins with broad specificity for peptide bonds. Preferentially cleaves -Arg-Arg-|-Xaa bonds in small molecule substrates (thus differing from cathepsin L). In addition to being an endopeptidase, shows peptidyl-dipeptidase activity, liberating C-terminal dipeptides.. Its function is as follows. Thiol protease which is believed to participate in intracellular degradation and turnover of proteins. Has also been implicated in tumor invasion and metastasis. The polypeptide is Cathepsin B (CTSB) (Gallus gallus (Chicken)).